A 68-amino-acid polypeptide reads, in one-letter code: Copper transport protein ATOX1 (68 aa).

Residues 1-63 enclose the HMA domain; sequence MPKHEFSVDM…TLEKTGKAVS (63 aa). Cysteine 12 and cysteine 15 together coordinate Cu cation. At serine 47 the chain carries Phosphoserine. Lysine 60 is modified (N6-acetyllysine).

The protein belongs to the ATX1 family. Homodimer. Interacts with ATP7B. Interacts with ATP7A. Interacts (via dimer form) with SLC31A1 (via C-terminal domain); this interaction improves ATOX1 stability and controls intracellular Cu(I) levels.

Binds and deliver cytosolic copper to the copper ATPase proteins. May be important in cellular antioxidant defense. This is Copper transport protein ATOX1 from Canis lupus familiaris (Dog).